A 383-amino-acid polypeptide reads, in one-letter code: S-adenosylmethionine synthase (383 aa).

Position 15 (His-15) interacts with ATP. Residue Asp-17 coordinates Mg(2+). Residue Glu-43 coordinates K(+). Residues Glu-56 and Gln-99 each contribute to the L-methionine site. The segment at 99–109 (QSPDINQGVDR) is flexible loop. ATP-binding positions include 164 to 166 (DAK), 230 to 231 (RF), Asp-239, 245 to 246 (RK), Ala-262, and Lys-266. Asp-239 lines the L-methionine pocket. An L-methionine-binding site is contributed by Lys-270.

This sequence belongs to the AdoMet synthase family. Homotetramer; dimer of dimers. Mg(2+) serves as cofactor. It depends on K(+) as a cofactor.

The protein resides in the cytoplasm. The enzyme catalyses L-methionine + ATP + H2O = S-adenosyl-L-methionine + phosphate + diphosphate. It participates in amino-acid biosynthesis; S-adenosyl-L-methionine biosynthesis; S-adenosyl-L-methionine from L-methionine: step 1/1. Its function is as follows. Catalyzes the formation of S-adenosylmethionine (AdoMet) from methionine and ATP. The overall synthetic reaction is composed of two sequential steps, AdoMet formation and the subsequent tripolyphosphate hydrolysis which occurs prior to release of AdoMet from the enzyme. This is S-adenosylmethionine synthase from Shewanella baltica (strain OS223).